The sequence spans 325 residues: Acetyl-coenzyme A carboxylase carboxyl transferase subunit alpha (325 aa).

The 258-residue stretch at 35-292 (EINKLEARLE…DDVLKRSLRE (258 aa)) folds into the CoA carboxyltransferase C-terminal domain.

It belongs to the AccA family. As to quaternary structure, acetyl-CoA carboxylase is a heterohexamer composed of biotin carboxyl carrier protein (AccB), biotin carboxylase (AccC) and two subunits each of ACCase subunit alpha (AccA) and ACCase subunit beta (AccD).

It localises to the cytoplasm. The catalysed reaction is N(6)-carboxybiotinyl-L-lysyl-[protein] + acetyl-CoA = N(6)-biotinyl-L-lysyl-[protein] + malonyl-CoA. Its pathway is lipid metabolism; malonyl-CoA biosynthesis; malonyl-CoA from acetyl-CoA: step 1/1. Component of the acetyl coenzyme A carboxylase (ACC) complex. First, biotin carboxylase catalyzes the carboxylation of biotin on its carrier protein (BCCP) and then the CO(2) group is transferred by the carboxyltransferase to acetyl-CoA to form malonyl-CoA. This is Acetyl-coenzyme A carboxylase carboxyl transferase subunit alpha from Anoxybacillus flavithermus (strain DSM 21510 / WK1).